A 617-amino-acid chain; its full sequence is MAKILGIDLGTTNSCMAVMEGGDAVVLPNAEGSRTTPSVVGFSKKGEKLVGQVAKRQAISNPENTVYSIKRHMGEANYKVTLNGKTYTPQEISAMILQKLKTEAEAYLGETIKQAVITVPAYFNDAQRQATKDAGSIAGLEVLRIINEPTAASLAYGLDKGDVDQKILVYDLGGGTFDVSILELGGGVFEVKSTSGDTHLGGDDFDQRVIDHLLAEFKKTEGIDLSKDKAILQRLKDAAEKAKIELSGVTVTNINLPFLTVGPDGEPKHMDIDLTRAQFQKMTEDLLEKTLVSMRRALSDSKLTPNDLDKVILVGGATRMPAVVELVENFTGKKPYKNINPDEAVAIGAAIQAGVLGGEVKDVLLLDVTPLTLGIETLGGIATPLIQRNTTIPTKKSQIFSTAADNQPSVEIHVLQGERGIASENKTLGRFTLDGIPPAPRGIPQIEVAFDIDANGILHVNAKDLGTGKEQSISIQKPGGLSDAEIERMVKDAELHAEEDKKRKEEVETRNNAEALINAAEKTIKEAGDVATEDQKSKVNAAIEDLKKALEGKDTEEVKAKTEALQEAVYPISTAMYQKAQQEAQQASGEAGSADARGPDETVVDADYEVVDDEKRK.

The segment at 579–617 is disordered; sequence KAQQEAQQASGEAGSADARGPDETVVDADYEVVDDEKRK. Positions 580–594 are enriched in low complexity; it reads AQQEAQQASGEAGSA. Over residues 602-617 the composition is skewed to acidic residues; it reads TVVDADYEVVDDEKRK.

This sequence belongs to the heat shock protein 70 family.

Functionally, acts as a chaperone. In Methanosarcina acetivorans (strain ATCC 35395 / DSM 2834 / JCM 12185 / C2A), this protein is Chaperone protein DnaK.